A 150-amino-acid chain; its full sequence is Large ribosomal subunit protein bL9 (150 aa).

The protein belongs to the bacterial ribosomal protein bL9 family.

Functionally, binds to the 23S rRNA. The polypeptide is Large ribosomal subunit protein bL9 (Leuconostoc citreum (strain KM20)).